The following is a 391-amino-acid chain: 1-deoxy-D-xylulose 5-phosphate reductoisomerase (391 aa).

Residue Asn109 participates in NADPH binding. Lys110 contributes to the 1-deoxy-D-xylulose 5-phosphate binding site. Glu111 lines the NADPH pocket. Residue Asp135 coordinates Mn(2+). 1-deoxy-D-xylulose 5-phosphate contacts are provided by Ser136, Glu137, Ser171, and His194. Glu137 serves as a coordination point for Mn(2+). Residue Gly200 participates in NADPH binding. 1-deoxy-D-xylulose 5-phosphate is bound by residues Ser207, Asn212, Arg213, and Glu216. Glu216 provides a ligand contact to Mn(2+).

It belongs to the DXR family. As to quaternary structure, homodimer. Mg(2+) serves as cofactor. It depends on Mn(2+) as a cofactor.

It carries out the reaction 2-C-methyl-D-erythritol 4-phosphate + NADP(+) = 1-deoxy-D-xylulose 5-phosphate + NADPH + H(+). The protein operates within isoprenoid biosynthesis; isopentenyl diphosphate biosynthesis via DXP pathway; isopentenyl diphosphate from 1-deoxy-D-xylulose 5-phosphate: step 1/6. Catalyzes the NADPH-dependent rearrangement and reduction of 1-deoxy-D-xylulose-5-phosphate (DXP) to 2-C-methyl-D-erythritol 4-phosphate (MEP). This Blochmanniella floridana protein is 1-deoxy-D-xylulose 5-phosphate reductoisomerase.